The primary structure comprises 663 residues: Drug sensory protein A (663 aa).

The next 3 membrane-spanning stretches (helical) occupy residues 32–52 (LMAAATLVVSLLMSGLTFWAV), 165–185 (VFIPLQYQGKFLGVLAIGINP), and 199–219 (VTIAVFISIWVMVILGAVFNA). In terms of domain architecture, HAMP spans 220–272 (LTITQPIKELLLGVKNIAAGNFKQRITLPFGGELGELIVNFNEMAERLERYEA). One can recognise a PAS domain in the interval 281–351 (EKAKLDTLVS…QPLRELAADQ (71 aa)). A Histidine kinase domain is found at 429–656 (NVSHELRTPL…TFWFDLAVYQ (228 aa)). Position 432 is a phosphohistidine; by autocatalysis (His432).

It is found in the cell membrane. The enzyme catalyses ATP + protein L-histidine = ADP + protein N-phospho-L-histidine.. The chain is Drug sensory protein A (dspA) from Synechocystis sp. (strain ATCC 27184 / PCC 6803 / Kazusa).